The chain runs to 568 residues: 2-succinyl-5-enolpyruvyl-6-hydroxy-3-cyclohexene-1-carboxylate synthase (568 aa).

This sequence belongs to the TPP enzyme family. MenD subfamily. Homodimer. It depends on Mg(2+) as a cofactor. Mn(2+) is required as a cofactor. Thiamine diphosphate serves as cofactor.

It catalyses the reaction isochorismate + 2-oxoglutarate + H(+) = 5-enolpyruvoyl-6-hydroxy-2-succinyl-cyclohex-3-ene-1-carboxylate + CO2. It participates in quinol/quinone metabolism; 1,4-dihydroxy-2-naphthoate biosynthesis; 1,4-dihydroxy-2-naphthoate from chorismate: step 2/7. The protein operates within quinol/quinone metabolism; menaquinone biosynthesis. Its function is as follows. Catalyzes the thiamine diphosphate-dependent decarboxylation of 2-oxoglutarate and the subsequent addition of the resulting succinic semialdehyde-thiamine pyrophosphate anion to isochorismate to yield 2-succinyl-5-enolpyruvyl-6-hydroxy-3-cyclohexene-1-carboxylate (SEPHCHC). In Histophilus somni (strain 2336) (Haemophilus somnus), this protein is 2-succinyl-5-enolpyruvyl-6-hydroxy-3-cyclohexene-1-carboxylate synthase.